The following is an 81-amino-acid chain: Costars family protein ABRACL (81 aa).

It belongs to the costars family.

The chain is Costars family protein ABRACL (abracl) from Danio rerio (Zebrafish).